Here is a 219-residue protein sequence, read N- to C-terminus: Endonuclease III (219 aa).

Residues 109-128 (RDELVKLPGVGRKTANVVVS) enclose the HhH domain. Residues C189, C196, C199, and C205 each contribute to the [4Fe-4S] cluster site.

The protein belongs to the Nth/MutY family. Requires [4Fe-4S] cluster as cofactor.

The catalysed reaction is 2'-deoxyribonucleotide-(2'-deoxyribose 5'-phosphate)-2'-deoxyribonucleotide-DNA = a 3'-end 2'-deoxyribonucleotide-(2,3-dehydro-2,3-deoxyribose 5'-phosphate)-DNA + a 5'-end 5'-phospho-2'-deoxyribonucleoside-DNA + H(+). Its function is as follows. DNA repair enzyme that has both DNA N-glycosylase activity and AP-lyase activity. The DNA N-glycosylase activity releases various damaged pyrimidines from DNA by cleaving the N-glycosidic bond, leaving an AP (apurinic/apyrimidinic) site. The AP-lyase activity cleaves the phosphodiester bond 3' to the AP site by a beta-elimination, leaving a 3'-terminal unsaturated sugar and a product with a terminal 5'-phosphate. The protein is Endonuclease III of Bacillus subtilis (strain 168).